A 364-amino-acid polypeptide reads, in one-letter code: ATP synthase gamma chain, chloroplastic (364 aa).

The N-terminal 41 residues, Met-1–Cys-41, are a transit peptide targeting the chloroplast. The disordered stretch occupies residues Pro-17–Thr-36. Residues Ala-25–Thr-36 show a composition bias toward low complexity. Residue Cys-130 is part of the active site. A disulfide bridge connects residues Cys-240 and Cys-246.

The protein belongs to the ATPase gamma chain family. As to quaternary structure, F-type ATPases have 2 components, CF(1) - the catalytic core - and CF(0) - the membrane proton channel. CF(1) has five subunits: alpha(3), beta(3), gamma(1), delta(1), epsilon(1). CF(0) has four main subunits: a, b, b' and c. In terms of processing, disulfide bond; Cys-240 and Cys-246 are known to form a disulfide bridge in the dark which gives rise to an inactive enzyme. Activation can be brought about by a ferredoxin-dependent reduction of the disulfide bond in the light.

The protein resides in the plastid. The protein localises to the chloroplast thylakoid membrane. In terms of biological role, produces ATP from ADP in the presence of a proton gradient across the membrane. The gamma chain is believed to be important in regulating ATPase activity and the flow of protons through the CF(0) complex. The sequence is that of ATP synthase gamma chain, chloroplastic (ATPC) from Spinacia oleracea (Spinach).